The sequence spans 124 residues: Period circadian protein (124 aa).

Residues 30 to 124 (TAPVELDPPK…TVTLTESLLN (95 aa)) are disordered. Low complexity predominate over residues 71-96 (SGNFTTGSNVRMSSVTNTSNAGTGTS). Gly residues predominate over residues 97–107 (SAGGNGNGGSG).

In terms of assembly, forms a heterodimer with timeless (TIM); the complex then translocates into the nucleus. Phosphorylated with a circadian rhythmicity, probably by the double-time protein (dbt). Phosphorylation could be implicated in the stability of per monomer and in the formation of heterodimer per-tim.

Its subcellular location is the nucleus. The protein localises to the cytoplasm. It is found in the perinuclear region. Functionally, essential for biological clock functions. Determines the period length of circadian and ultradian rhythms; an increase in PER dosage leads to shortened circadian rhythms and a decrease leads to lengthened circadian rhythms. Essential for the circadian rhythmicity of locomotor activity, eclosion behavior, and for the rhythmic component of the male courtship song that originates in the thoracic nervous system. The biological cycle depends on the rhythmic formation and nuclear localization of the TIM-PER complex. Light induces the degradation of TIM, which promotes elimination of PER. Nuclear activity of the heterodimer coordinatively regulates PER and TIM transcription through a negative feedback loop. Behaves as a negative element in circadian transcriptional loop. Does not appear to bind DNA, suggesting indirect transcriptional inhibition. The protein is Period circadian protein (per) of Hirtodrosophila pictiventris (Fruit fly).